The sequence spans 206 residues: Sclerostin domain-containing protein 1 (206 aa).

A signal peptide spans 1-23 (MLPPAIHLSLIPLLCILMKNCLA). The interval 42–62 (AHPSSNSTLNQARNGGRHFSS) is disordered. The span at 43 to 62 (HPSSNSTLNQARNGGRHFSS) shows a compositional bias: polar residues. The N-linked (GlcNAc...) asparagine glycan is linked to asparagine 47. 4 cysteine pairs are disulfide-bonded: cysteine 75-cysteine 133, cysteine 89-cysteine 147, cysteine 100-cysteine 163, and cysteine 104-cysteine 165. The 96-residue stretch at 75-170 (CRELRSTKYI…TACKCKRYTR (96 aa)) folds into the CTCK domain. A glycan (N-linked (GlcNAc...) asparagine) is linked at asparagine 173. Residues 176-206 (SHNFESVSPAKPAQHHRERKRASKSSKHSLS) form a disordered region. The segment covering 188–206 (AQHHRERKRASKSSKHSLS) has biased composition (basic residues).

Belongs to the sclerostin family. In terms of assembly, interacts with BMP2, BMP4, BMP6 and BMP7 with high affinity. Highly expressed within the maximally sensitized/receptive endometrium. Weakly expressed in brain, kidney and the female reproductive tract. Expressed in the dermal papilla (DP) and at high level in the precortex of both anagen vibrissae and pelage follicles. Dynymic expression during the hair cycle.

The protein resides in the secreted. In terms of biological role, directly antagonizes activity of BMP2, BMP4, BMP6 and BMP7 in a dose-dependent manner. May be involved in the onset of endometrial receptivity for implantation/sensitization for the decidual cell reaction. Enhances Wnt signaling and inhibits TGF-beta signaling. In Rattus norvegicus (Rat), this protein is Sclerostin domain-containing protein 1 (Sostdc1).